A 146-amino-acid chain; its full sequence is VHWSAEEKQLITGLWGKVNVADCGAEALARLLIVYPWTERFFSSFGNLSSPTAIIGNPMVRAHGKKVLTSFGEAVKNLDNIKNTFAQLSELHCDKLHVDPENFRLLGDILIIVLAAHFSKDFTPDCQAAWQKLVRVVAHALARKYH.

The region spanning 2–146 (HWSAEEKQLI…VAHALARKYH (145 aa)) is the Globin domain. Heme b is bound by residues His63 and His92.

The protein belongs to the globin family. As to quaternary structure, heterotetramer of two alpha chains and two beta chains. In terms of tissue distribution, red blood cells.

Functionally, involved in oxygen transport from the lung to the various peripheral tissues. This is Hemoglobin subunit beta (HBB) from Anseranas semipalmata (Magpie goose).